The primary structure comprises 177 residues: Large ribosomal subunit protein uL6 (177 aa).

Belongs to the universal ribosomal protein uL6 family. As to quaternary structure, part of the 50S ribosomal subunit.

Its function is as follows. This protein binds to the 23S rRNA, and is important in its secondary structure. It is located near the subunit interface in the base of the L7/L12 stalk, and near the tRNA binding site of the peptidyltransferase center. This Acinetobacter baumannii (strain AB307-0294) protein is Large ribosomal subunit protein uL6.